Reading from the N-terminus, the 271-residue chain is Formamidopyrimidine-DNA glycosylase (271 aa).

Residue P2 is the Schiff-base intermediate with DNA of the active site. The active-site Proton donor is the E3. K58 serves as the catalytic Proton donor; for beta-elimination activity. H91 and R109 together coordinate DNA. An FPG-type zinc finger spans residues 236–270 (FVYGREGLACRVCATPVRRVVIGQRSTFFCPRCQR). Catalysis depends on R260, which acts as the Proton donor; for delta-elimination activity.

The protein belongs to the FPG family. Monomer. Zn(2+) is required as a cofactor.

The catalysed reaction is Hydrolysis of DNA containing ring-opened 7-methylguanine residues, releasing 2,6-diamino-4-hydroxy-5-(N-methyl)formamidopyrimidine.. It catalyses the reaction 2'-deoxyribonucleotide-(2'-deoxyribose 5'-phosphate)-2'-deoxyribonucleotide-DNA = a 3'-end 2'-deoxyribonucleotide-(2,3-dehydro-2,3-deoxyribose 5'-phosphate)-DNA + a 5'-end 5'-phospho-2'-deoxyribonucleoside-DNA + H(+). In terms of biological role, involved in base excision repair of DNA damaged by oxidation or by mutagenic agents. Acts as a DNA glycosylase that recognizes and removes damaged bases. Has a preference for oxidized purines, such as 7,8-dihydro-8-oxoguanine (8-oxoG). Has AP (apurinic/apyrimidinic) lyase activity and introduces nicks in the DNA strand. Cleaves the DNA backbone by beta-delta elimination to generate a single-strand break at the site of the removed base with both 3'- and 5'-phosphates. This is Formamidopyrimidine-DNA glycosylase from Aromatoleum aromaticum (strain DSM 19018 / LMG 30748 / EbN1) (Azoarcus sp. (strain EbN1)).